We begin with the raw amino-acid sequence, 1410 residues long: Non-secreted LysM effector LysM15 (1410 aa).

2 LysM domains span residues 1179–1225 (TTYT…DICM) and 1231–1277 (TQYT…EILG). Residues 1291–1303 (TTGDGITTTPGNG) show a composition bias toward low complexity. Residues 1291 to 1317 (TTGDGITTTPGNGEYAQGVVSPPENST) form a disordered region. Residues 1328–1375 (RWYSATADDLCVQICLKSGVSAKLFKAANPSLAADCDNSLIAGDAYCV) enclose the LysM 3 domain.

The protein belongs to the secreted LysM effector family.

Functionally, non-secreted LysM effector that might be involved in manipulation of host defenses for successful infection. This chain is Non-secreted LysM effector LysM15, found in Penicillium expansum (Blue mold rot fungus).